The primary structure comprises 415 residues: MVQRWLYSTNAKDIAVLYFMLAIFSGMAGTAMSLIIRLELAAPGSQYLHGNSQLFNVLVVGHAVLMIFFLVMPALIGGFGNQKRYESNNNNNQVMENKEYNLKLNYDKLGPYLAGLIEGDGTITVQNSSSMKKSKYRPLIVVVFKLEDLELANYLCNLTKCGKVYKKINRNYVLWTIHDLKGVYTLLNIINGYMRTPKYEAFVRGAEFMNNYINSTTITHNKLKNMDNIKIKPLDTSDIGSNAWLAGMTDADGNFSINLMNGKNRSSRAMPYYCLELRQNYQKNSNNNNINFSYFYIMSAIATYFNVNLYSRERNLNLLVSTNNTYKTYYSYKVMVANTYKNIKVMEYFNKYSLLSSKHLDFLDWSKLVILINNEGQSMKTNGSWELGMNLRKDYNKTRTTFTWSHLKNTYLENK.

The tract at residues 1 to 81 (MVQRWLYSTN…MPALIGGFGN (81 aa)) is COX1 exons 1 to 3 encoded. 2 helical membrane-spanning segments follow: residues 16-36 (VLYF…SLII) and 57-77 (VLVV…ALIG). The COX1 intron 3 encoded stretch occupies residues 82-415 (QKRYESNNNN…HLKNTYLENK (334 aa)).

The protein in the C-terminal section; belongs to the LAGLIDADG endonuclease family. It depends on Mg(2+) as a cofactor. In terms of processing, the mature protein may arise from proteolytic cleavage of an in-frame translation of some COX1 exons plus the intron containing the aI3 open reading frame.

It localises to the mitochondrion. The protein resides in the membrane. In terms of biological role, mitochondrial DNA endonuclease involved in intron homing. It introduces a specific double-strand break in the DNA of the COX1 gene and thus mediates the insertion of an intron, containing its own coding sequence (group I intron), into an intronless gene. Recognizes with high specificity and cleaves the sequence 5'-GGTTTTGGTAACTATTTATTAC-3'. The sequence is that of Intron-encoded DNA endonuclease aI3 (AI3) from Saccharomyces cerevisiae (strain ATCC 204508 / S288c) (Baker's yeast).